The primary structure comprises 654 residues: MGRWAWGPSLCPLPGMALLLLLLLLLVPHGAQPQAGGNLTEPPEPNATVTPGTPMIPVTSVTPVTPATSAPEAQGPRGRGLTPPPRAAPSSSSPGDPVLTVDGQPCRFPFRYGGRMLHACTSEGSAHRKWCATTHNYDRDRAWGYCVQAPVSREGPAALDSCASSPCLNGGSCSHTQDPGSYHCTCPMAFTGRNCDTEKCFDETRYEHLEAGDRWARVSQGQVEQCECAGGQIRCEGTRHTACLSSPCLNGGTCHLIVATGTTVCSCPPGHAGRLCNIVPSQRCFVGNGTEYRGVASTAASGLSCLAWNSDLLYQELHVDSVGAAALLGLGPHAYCRNPDKDERPWCYVVKDSALSWEYCRLAACESLARIPSLTTAVLLSQAEPAPVGRQTCGKRHKKRTFLRPRIIGGSSSLPGSHPWLAAIYIGDSFCAGSLVHTCWVVSAAHCFSNSPRRESVLVVLGQHFFNQTTDVTQTFGIEKYIPYPMYSVFNPSDHDLVLIRLKKKGDRCAIRSQFVQPICLPEPSSPFPAGHKCQIAGWGHQDENVSGYSSSLREALVPLVADHKCSSPEVYGADISPNMLCAGYFDCKSDACQGDSGGPLACEKNGVAYLYGIISWGDGCGRLNKPGVYTRVAKYVDWIKDRIWPSKRPSDPS.

A signal peptide spans 1–33 (MGRWAWGPSLCPLPGMALLLLLLLLLVPHGAQP). The tract at residues 34 to 100 (QAGGNLTEPP…SSSPGDPVLT (67 aa)) is disordered. The propeptide at 34 to 370 (QAGGNLTEPP…RLAACESLAR (337 aa)) is removed in mature form. Residues Asn38 and Asn46 are each glycosylated (N-linked (GlcNAc...) asparagine). The segment covering 57–81 (PVTSVTPVTPATSAPEAQGPRGRGL) has biased composition (low complexity). The region spanning 101-148 (VDGQPCRFPFRYGGRMLHACTSEGSAHRKWCATTHNYDRDRAWGYCVQ) is the Fibronectin type-II domain. 19 cysteine pairs are disulfide-bonded: Cys106–Cys131, Cys120–Cys146, Cys162–Cys173, Cys167–Cys184, Cys186–Cys195, Cys200–Cys228, Cys226–Cys235, Cys243–Cys254, Cys248–Cys265, Cys267–Cys276, Cys284–Cys365, Cys305–Cys347, Cys336–Cys360, Cys393–Cys520, Cys431–Cys447, Cys439–Cys509, Cys534–Cys603, Cys566–Cys582, and Cys593–Cys621. The EGF-like 1 domain occupies 158 to 196 (ALDSCASSPCLNGGSCSHTQDPGSYHCTCPMAFTGRNCD). The 41-residue stretch at 198 to 238 (EKCFDETRYEHLEAGDRWARVSQGQVEQCECAGGQIRCEGT) folds into the Fibronectin type-I domain. An EGF-like 2 domain is found at 239 to 277 (RHTACLSSPCLNGGTCHLIVATGTTVCSCPPGHAGRLCN). The Kringle domain occupies 283 to 365 (RCFVGNGTEY…SWEYCRLAAC (83 aa)). Asn288 carries N-linked (GlcNAc...) asparagine glycosylation. Residues 407 to 645 (IIGGSSSLPG…YVDWIKDRIW (239 aa)) enclose the Peptidase S1 domain. The active-site Charge relay system is the His446. Residues Asn467 and Asn491 are each glycosylated (N-linked (GlcNAc...) asparagine). Asp496 (charge relay system) is an active-site residue. Asn545 carries N-linked (GlcNAc...) asparagine glycosylation. The Charge relay system role is filled by Ser597.

This sequence belongs to the peptidase S1 family. Heterodimer of a short chain and a long chain linked by a disulfide bond. In terms of processing, the active form of HGFAC presents in the serum is derived from the COOH-terminal region of the precursor by the cleavage of bonds between Arg-370 and Ile-371 and Arg-406 and Ile-407. As to expression, liver.

It is found in the secreted. Its function is as follows. Serine protease that hydrolyzes the inactive zymogen hepatocyte growth factor (HGFsc) to an activated disulfide-linked heterodimer, then initiating hepatocyte growth factor receptor signaling pathway. This Canis lupus familiaris (Dog) protein is Hepatocyte growth factor activator serine proteases (HGFAC).